A 527-amino-acid polypeptide reads, in one-letter code: Peptide chain release factor 3 (527 aa).

The region spanning 10–278 (DRRRTFAIIS…TFVENAPAPL (269 aa)) is the tr-type G domain. GTP contacts are provided by residues 19 to 26 (SHPDAGKT), 87 to 91 (DTPGH), and 141 to 144 (NKLD).

It belongs to the TRAFAC class translation factor GTPase superfamily. Classic translation factor GTPase family. PrfC subfamily.

The protein localises to the cytoplasm. In terms of biological role, increases the formation of ribosomal termination complexes and stimulates activities of RF-1 and RF-2. It binds guanine nucleotides and has strong preference for UGA stop codons. It may interact directly with the ribosome. The stimulation of RF-1 and RF-2 is significantly reduced by GTP and GDP, but not by GMP. The chain is Peptide chain release factor 3 from Geobacter metallireducens (strain ATCC 53774 / DSM 7210 / GS-15).